Reading from the N-terminus, the 177-residue chain is Large ribosomal subunit protein uL5 (177 aa).

Belongs to the universal ribosomal protein uL5 family. Part of the 50S ribosomal subunit; contacts the 5S rRNA and probably tRNA. Forms a bridge to the 30S subunit in the 70S ribosome.

This is one of the proteins that bind and probably mediate the attachment of the 5S RNA into the large ribosomal subunit, where it forms part of the central protuberance. In the 70S ribosome it contacts protein S13 of the 30S subunit (bridge B1b), connecting the 2 subunits; this bridge is implicated in subunit movement. May contact the P site tRNA; the 5S rRNA and some of its associated proteins might help stabilize positioning of ribosome-bound tRNAs. The polypeptide is Large ribosomal subunit protein uL5 (Sulfurisphaera tokodaii (strain DSM 16993 / JCM 10545 / NBRC 100140 / 7) (Sulfolobus tokodaii)).